The sequence spans 218 residues: MLRFLSKNSVAAIRNVSIARGVHTKATLPPLPYAYNALEPALSETIMKLHHDKHHQTYVNNLNAAQEKLADPNLDLEGEVALQAAIKFNGGGHINHSLFWKILAPQKEGGGKPVTSGSLHKAITSKWGSLEDFQKEMNAALASIQGSGWAWLIVDKDGSLRITTTANQDTIVKSKPIIGIDAWEHAYYPQYENRKAEYFKAIWNVINWKEAESRYSNR.

The transit peptide at 1-21 (MLRFLSKNSVAAIRNVSIARG) directs the protein to the mitochondrion. Positions 50 and 96 each coordinate Mn(2+). Ser129 carries the phosphoserine modification. The Mn(2+) site is built by Asp181 and His185.

Belongs to the iron/manganese superoxide dismutase family. As to quaternary structure, homodimer. The cofactor is Mn(2+).

Its subcellular location is the mitochondrion matrix. The catalysed reaction is 2 superoxide + 2 H(+) = H2O2 + O2. In terms of biological role, destroys superoxide anion radicals which are normally produced within the cells and which are toxic to biological systems. The polypeptide is Superoxide dismutase [Mn], mitochondrial (sod2) (Schizosaccharomyces pombe (strain 972 / ATCC 24843) (Fission yeast)).